The chain runs to 179 residues: ATP synthase subunit delta (179 aa).

This sequence belongs to the ATPase delta chain family. F-type ATPases have 2 components, F(1) - the catalytic core - and F(0) - the membrane proton channel. F(1) has five subunits: alpha(3), beta(3), gamma(1), delta(1), epsilon(1). F(0) has three main subunits: a(1), b(2) and c(10-14). The alpha and beta chains form an alternating ring which encloses part of the gamma chain. F(1) is attached to F(0) by a central stalk formed by the gamma and epsilon chains, while a peripheral stalk is formed by the delta and b chains.

It is found in the cell inner membrane. F(1)F(0) ATP synthase produces ATP from ADP in the presence of a proton or sodium gradient. F-type ATPases consist of two structural domains, F(1) containing the extramembraneous catalytic core and F(0) containing the membrane proton channel, linked together by a central stalk and a peripheral stalk. During catalysis, ATP synthesis in the catalytic domain of F(1) is coupled via a rotary mechanism of the central stalk subunits to proton translocation. In terms of biological role, this protein is part of the stalk that links CF(0) to CF(1). It either transmits conformational changes from CF(0) to CF(1) or is implicated in proton conduction. This chain is ATP synthase subunit delta, found in Acidithiobacillus ferrooxidans (strain ATCC 23270 / DSM 14882 / CIP 104768 / NCIMB 8455) (Ferrobacillus ferrooxidans (strain ATCC 23270)).